We begin with the raw amino-acid sequence, 109 residues long: Parvalbumin beta (109 aa).

The residue at position 2 (Ala2) is an N-acetylalanine. EF-hand domains lie at 39–74 (KSADEVKKAFAIIDQDKSGYIEEEELKLFLQNFKAG) and 78–109 (LSDAETKAFLKAGDSDGDGKIGVDEFAAMIKG). Positions 52, 54, 56, 58, 60, 63, 91, 93, 95, 97, and 102 each coordinate Ca(2+).

It belongs to the parvalbumin family. Post-translationally, the N-terminus is blocked.

In muscle, parvalbumin is thought to be involved in relaxation after contraction. It binds two calcium ions. This is Parvalbumin beta from Scomber scombrus (Atlantic mackerel).